The following is a 219-amino-acid chain: UPF0073 inner membrane protein YqfA (219 aa).

Topologically, residues 1–23 (MVQKPLIKQGYSLAEEIANSVSH) are cytoplasmic. The helical transmembrane segment at 24–44 (GIGLVFGIVGLVLLLVQAVDL) threads the bilayer. Topologically, residues 45–53 (NASATAITS) are periplasmic. The helical transmembrane segment at 54–74 (YSLYGGSMILLFLASTLYHAI) threads the bilayer. Residues 75 to 90 (PHQRAKMWLKKFDHCA) lie on the Cytoplasmic side of the membrane. Residues 91–111 (IYLLIAGTYTPFLLVGLDSPL) traverse the membrane as a helical segment. Residues 112-113 (AR) are Periplasmic-facing. A helical membrane pass occupies residues 114–134 (GLMIVIWSLALLGILFKLTIA). Residues 135–138 (HRFK) lie on the Cytoplasmic side of the membrane. Residues 139–159 (ILSLVTYLAMGWLSLVVIYEM) form a helical membrane-spanning segment. Topologically, residues 160-165 (AVKLAA) are periplasmic. Residues 166 to 186 (GSVTLLAVGGVVYSLGVIFYV) form a helical membrane-spanning segment. Residues 187–195 (CKRIPYNHA) are Cytoplasmic-facing. Residues 196-216 (IWHGFVLGGSVCHFLAIYLYI) traverse the membrane as a helical segment. The Periplasmic segment spans residues 217–219 (GQA).

The protein belongs to the UPF0073 (Hly-III) family.

It is found in the cell inner membrane. The protein is UPF0073 inner membrane protein YqfA (yqfA) of Escherichia coli O157:H7.